The primary structure comprises 502 residues: Ribose import ATP-binding protein RbsA (502 aa).

2 consecutive ABC transporter domains span residues 6–242 (IDMT…IARD) and 253–496 (ALGA…SGAR). 38-45 (GQNGAGKS) is a binding site for ATP.

It belongs to the ABC transporter superfamily. Ribose importer (TC 3.A.1.2.1) family. In terms of assembly, the complex is composed of an ATP-binding protein (RbsA), two transmembrane proteins (RbsC) and a solute-binding protein (RbsB).

Its subcellular location is the cell inner membrane. It carries out the reaction D-ribose(out) + ATP + H2O = D-ribose(in) + ADP + phosphate + H(+). Part of the ABC transporter complex RbsABC involved in ribose import. Responsible for energy coupling to the transport system. This Cereibacter sphaeroides (strain ATCC 17023 / DSM 158 / JCM 6121 / CCUG 31486 / LMG 2827 / NBRC 12203 / NCIMB 8253 / ATH 2.4.1.) (Rhodobacter sphaeroides) protein is Ribose import ATP-binding protein RbsA.